Reading from the N-terminus, the 475-residue chain is tRNA-2-methylthio-N(6)-dimethylallyladenosine synthase (475 aa).

The 118-residue stretch at 2–119 folds into the MTTase N-terminal domain; that stretch reads AKLHITTWGC…LPEMINKIRG (118 aa). The [4Fe-4S] cluster site is built by cysteine 11, cysteine 48, cysteine 82, cysteine 156, cysteine 160, and cysteine 163. A Radical SAM core domain is found at 142–374; it reads RAEGPTAFVS…QQRINHQAMQ (233 aa). In terms of domain architecture, TRAM spans 377-440; that stretch reads RAMLGTEQRV…TNSLRGEVVR (64 aa).

This sequence belongs to the methylthiotransferase family. MiaB subfamily. In terms of assembly, monomer. The cofactor is [4Fe-4S] cluster.

The protein resides in the cytoplasm. The catalysed reaction is N(6)-dimethylallyladenosine(37) in tRNA + (sulfur carrier)-SH + AH2 + 2 S-adenosyl-L-methionine = 2-methylsulfanyl-N(6)-dimethylallyladenosine(37) in tRNA + (sulfur carrier)-H + 5'-deoxyadenosine + L-methionine + A + S-adenosyl-L-homocysteine + 2 H(+). In terms of biological role, catalyzes the methylthiolation of N6-(dimethylallyl)adenosine (i(6)A), leading to the formation of 2-methylthio-N6-(dimethylallyl)adenosine (ms(2)i(6)A) at position 37 in tRNAs that read codons beginning with uridine. This chain is tRNA-2-methylthio-N(6)-dimethylallyladenosine synthase, found in Actinobacillus pleuropneumoniae serotype 3 (strain JL03).